Here is a 513-residue protein sequence, read N- to C-terminus: Ankyrin repeat domain-containing protein 13C-B (513 aa).

Over residues 1 to 19 (MTGEKIRSLHRDQKPSKDE) the composition is skewed to basic and acidic residues. 2 disordered regions span residues 1–34 (MTGE…DGTF) and 55–77 (PSNP…PMTP). Positions 20 to 29 (DLLEPDEEAT) are enriched in acidic residues. ANK repeat units lie at residues 83-114 (DVYF…QKDN), 115-144 (HGNT…PVKV), and 148-177 (QGWS…QQSR).

Its subcellular location is the endoplasmic reticulum membrane. Functionally, acts as a molecular chaperone for G protein-coupled receptors, regulating their biogenesis and exit from the ER. This Xenopus laevis (African clawed frog) protein is Ankyrin repeat domain-containing protein 13C-B (ankrd13c-b).